Here is a 274-residue protein sequence, read N- to C-terminus: 2,3,4,5-tetrahydropyridine-2,6-dicarboxylate N-succinyltransferase (274 aa).

This sequence belongs to the transferase hexapeptide repeat family.

The protein resides in the cytoplasm. The catalysed reaction is (S)-2,3,4,5-tetrahydrodipicolinate + succinyl-CoA + H2O = (S)-2-succinylamino-6-oxoheptanedioate + CoA. Its pathway is amino-acid biosynthesis; L-lysine biosynthesis via DAP pathway; LL-2,6-diaminopimelate from (S)-tetrahydrodipicolinate (succinylase route): step 1/3. The chain is 2,3,4,5-tetrahydropyridine-2,6-dicarboxylate N-succinyltransferase from Erwinia tasmaniensis (strain DSM 17950 / CFBP 7177 / CIP 109463 / NCPPB 4357 / Et1/99).